The following is a 306-amino-acid chain: Ribonuclease Z (306 aa).

7 residues coordinate Zn(2+): histidine 61, histidine 63, aspartate 65, histidine 66, histidine 137, aspartate 207, and histidine 263. Catalysis depends on aspartate 65, which acts as the Proton acceptor.

Belongs to the RNase Z family. In terms of assembly, homodimer. Zn(2+) serves as cofactor.

The enzyme catalyses Endonucleolytic cleavage of RNA, removing extra 3' nucleotides from tRNA precursor, generating 3' termini of tRNAs. A 3'-hydroxy group is left at the tRNA terminus and a 5'-phosphoryl group is left at the trailer molecule.. Functionally, zinc phosphodiesterase, which displays some tRNA 3'-processing endonuclease activity. Probably involved in tRNA maturation, by removing a 3'-trailer from precursor tRNA. This is Ribonuclease Z from Thermococcus sibiricus (strain DSM 12597 / MM 739).